Reading from the N-terminus, the 167-residue chain is Transmembrane protein 229B (167 aa).

The Cytoplasmic portion of the chain corresponds to 1-14 (MASAEPLTALSRWY). Residues 15–35 (LYAIHGYFCEVMFTAAWEFVV) traverse the membrane as a helical segment. Residues 36–40 (NFNWK) are Extracellular-facing. A helical membrane pass occupies residues 41–61 (FPGVTSVWALFIYGTSILIVE). Topologically, residues 62–73 (RMYLRLRGRCPL) are cytoplasmic. A helical transmembrane segment spans residues 74-94 (LLRCLIYTLWTYLWEFTTGFI). Over 95 to 111 (LRQFNACPWDYSQFDFD) the chain is Extracellular. A helical transmembrane segment spans residues 112-132 (FMGLITLEYAVPWFCGALLVE). Residues 133–167 (QFVIRNTLRLRFDKDAEPGEPSGALALANGHVKTD) are Cytoplasmic-facing.

This sequence belongs to the TMEM229 family.

Its subcellular location is the membrane. The sequence is that of Transmembrane protein 229B (TMEM229B) from Bos taurus (Bovine).